A 473-amino-acid polypeptide reads, in one-letter code: MDSVYKTDENFAADVAALLAPLPTPQLQEYFNKLITSRRCNGIEVKNNGTIGKGVYANSEFDEDELILKDEILVGIQHSSNKVDCLVCSFCFRFIGSIEKQIGRKLYFKNLGVSGCCDDDSSEEDECVKYNGNEEQCGGSSSSHNTLPEGVVSSLMNGEMALPHTDKFPLPSPLSCPGGCQEAFYCSESCAAADWESSHSLLCTGERSESISREALGEFIKHANDTNDIFLLAAKAIAFTILRYRKLKAEHVDKKAKQSEPKQSLLLEAWKPVSIGYKRRWWDCIALPDDVDPTDEGAFRMQIKNLACTSLELLKIAIFDKECEALFSLEIYGNIIGMFELNNLDLVVASPVEDYFLYIDDLPDAEKEETEEITRPFLDALGDEYSDCCQGTAFFPLQSCMNHSCCPNAKAFKREEDRDGQAVIIALRRISKNEEVTISYIDEELPYKERQALLADYGFSCKCSKCLEDSSSI.

The region spanning 33–441 (KLITSRRCNG…KNEEVTISYI (409 aa)) is the SET domain. The segment at 134–203 (EEQCGGSSSS…DWESSHSLLC (70 aa)) adopts an MYND-type; degenerate zinc-finger fold. C176, C180, H199, and C203 together coordinate Zn(2+). Residue Y440 coordinates S-adenosyl-L-methionine.

It belongs to the class V-like SAM-binding methyltransferase superfamily. Histone-lysine methyltransferase family. TRX/MLL subfamily. As to quaternary structure, interacts with JMJ30. Binds to ARF7 and ARF19 in the nucleus.

The protein resides in the nucleus. It carries out the reaction L-lysyl-[histone] + S-adenosyl-L-methionine = N(6)-methyl-L-lysyl-[histone] + S-adenosyl-L-homocysteine + H(+). Its function is as follows. Histone methyltransferase that methylates 'Lys-36' (H3K36me) of histone H3 to produce H3K36me3. Promotes early stages of cellular dedifferentiation through H3K36me3-dependent, and to a lesser degree H3K4me3-dependent, activation of Lateral organ Boundaries-Domain (LBD) (e.g. LBD16 and LBD29) genes. Positive regulator of root organogenesis including lateral root formation as well as adventitious root formation from wounded leaf tissues. Recruited by JMJ30/ARF (e.g. ARF7 and ARF19) complexes to promote the deposition of H3K36me3 and, to a lower extent, H3K4me3 at LBD genes promoters, thus ensuring their stable activation during callus formation on callus-inducing medium (CIM). This chain is Histone-lysine N-methyltransferase ATXR2, found in Arabidopsis thaliana (Mouse-ear cress).